The sequence spans 335 residues: Probable geranylgeranyl transferase type-2 subunit beta (335 aa).

PFTB repeat units lie at residues 74-115, 122-163, 170-211, 218-259, and 266-312; these read TEEI…IIFN, ADTI…HLLG, IDSA…AIAG, RDRT…AILG, and SDAM…DDTL. Residues 196–198 and 238–250 each bind geranylgeranyl diphosphate; these read HSG and RPEK…YSWW. The Zn(2+) site is built by aspartate 244, cysteine 246, and histidine 296.

The protein belongs to the protein prenyltransferase subunit beta family. Heterodimer of an alpha and a beta subunit. Zn(2+) serves as cofactor.

It carries out the reaction geranylgeranyl diphosphate + L-cysteinyl-[protein] = S-geranylgeranyl-L-cysteinyl-[protein] + diphosphate. Its function is as follows. Catalyzes the transfer of a geranyl-geranyl moiety from geranyl-geranyl pyrophosphate to both cysteines in Rab proteins with an -XXCC, -XCXC and -CCXX C-terminal. This chain is Probable geranylgeranyl transferase type-2 subunit beta (ggtb-1), found in Caenorhabditis elegans.